The primary structure comprises 342 residues: L-threonine 3-dehydrogenase (342 aa).

Position 38 (cysteine 38) interacts with Zn(2+). Active-site charge relay system residues include threonine 40 and histidine 43. Zn(2+) contacts are provided by histidine 63, glutamate 64, cysteine 93, cysteine 96, cysteine 99, and cysteine 107. NAD(+) is bound by residues isoleucine 175, aspartate 195, arginine 200, 262–264 (LGL), and 286–287 (IY).

It belongs to the zinc-containing alcohol dehydrogenase family. Homotetramer. It depends on Zn(2+) as a cofactor.

Its subcellular location is the cytoplasm. The catalysed reaction is L-threonine + NAD(+) = (2S)-2-amino-3-oxobutanoate + NADH + H(+). It functions in the pathway amino-acid degradation; L-threonine degradation via oxydo-reductase pathway; glycine from L-threonine: step 1/2. Its function is as follows. Catalyzes the NAD(+)-dependent oxidation of L-threonine to 2-amino-3-ketobutyrate. This chain is L-threonine 3-dehydrogenase, found in Streptomyces avermitilis (strain ATCC 31267 / DSM 46492 / JCM 5070 / NBRC 14893 / NCIMB 12804 / NRRL 8165 / MA-4680).